The primary structure comprises 266 residues: 3-methyl-2-oxobutanoate hydroxymethyltransferase (266 aa).

The Mg(2+) site is built by Asp-45 and Asp-84. Residues 45 to 46 (DS), Asp-84, and Lys-112 each bind 3-methyl-2-oxobutanoate. Glu-114 is a binding site for Mg(2+). Glu-181 acts as the Proton acceptor in catalysis.

The protein belongs to the PanB family. As to quaternary structure, homodecamer; pentamer of dimers. Requires Mg(2+) as cofactor.

The protein resides in the cytoplasm. It catalyses the reaction 3-methyl-2-oxobutanoate + (6R)-5,10-methylene-5,6,7,8-tetrahydrofolate + H2O = 2-dehydropantoate + (6S)-5,6,7,8-tetrahydrofolate. Its pathway is cofactor biosynthesis; (R)-pantothenate biosynthesis; (R)-pantoate from 3-methyl-2-oxobutanoate: step 1/2. Its function is as follows. Catalyzes the reversible reaction in which hydroxymethyl group from 5,10-methylenetetrahydrofolate is transferred onto alpha-ketoisovalerate to form ketopantoate. The chain is 3-methyl-2-oxobutanoate hydroxymethyltransferase from Pseudomonas fluorescens (strain Pf0-1).